A 496-amino-acid chain; its full sequence is DNA-dependent metalloprotease SPRTN (496 aa).

Met-1 bears the N-acetylmethionine mark. A SprT-like domain is found at 45–212 (LQALFLQFND…KTCGGTYIKI (168 aa)). Zn(2+) is bound at residue His-111. Glu-112 is an active-site residue. Zn(2+) contacts are provided by His-115 and His-130. Lys-230 carries the N6-acetyllysine modification. The SHP-box signature appears at 253–261 (FSGKGYVLG). Phosphoserine is present on Ser-268. Lys-303 participates in a covalent cross-link: Glycyl lysine isopeptide (Lys-Gly) (interchain with G-Cter in SUMO2). The PIP-box signature appears at 326 to 333 (QSVLSSYF). Lys-342 participates in a covalent cross-link: Glycyl lysine isopeptide (Lys-Gly) (interchain with G-Cter in SUMO2); alternate. Lys-342 participates in a covalent cross-link: Glycyl lysine isopeptide (Lys-Gly) (interchain with G-Cter in ubiquitin); alternate. The interval 346–459 (NVNGSPVKSG…STPRSSGGQR (114 aa)) is disordered. Lys-361 is covalently cross-linked (Glycyl lysine isopeptide (Lys-Gly) (interchain with G-Cter in SUMO2)). Residues 382–403 (SSKVTAPASATVTSAAGTSAAI) show a composition bias toward low complexity. Ser-383 carries the phosphoserine modification. The Nuclear localization signal signature appears at 412–423 (DQFLNKRPRLED). Composition is skewed to polar residues over residues 426–437 (ALNNIKEQTQSG) and 445–457 (RPTA…SSGG). A Glycyl lysine isopeptide (Lys-Gly) (interchain with G-Cter in SUMO2) cross-link involves residue Lys-431. The UBZ4-type zinc finger occupies 461-488 (LVNCPVCQGVVLESQINEHLDRCLEGSK). 4 residues coordinate Zn(2+): Cys-464, Cys-467, His-479, and Cys-483.

It belongs to the Spartan family. In terms of assembly, homodimer. Interacts (VIA PIP-box) with PCNA (when ubiquitinated). Interacts (via its SHP-box) with VCP/p97. Interacts with RAD18. Interacts with KCTD13 and POLD3. Zn(2+) is required as a cofactor. Post-translationally, autocatalytically cleaved in response to double-stranded DNA-binding: autocatalytic cleavage takes place in trans and leads to inactivation. Monoubiquitinated; monoubiquitination promotes exclusion from chromatin. Deubiquitinated by VCPIP1: deubiquitination is required for subsequent acetylation and recruitment to chromatin and DNA damage sites. In terms of processing, acetylated following deubiquitination by VCPIP1, leading to recruitment to chromatin and DNA damage sites. Post-translationally, phosphorylation by CHEK1 promotes recruitment to chromatin.

The protein localises to the nucleus. It is found in the chromosome. With respect to regulation, DNA-binding activates the protease activity: single-stranded DNA-binding specifically activates ability to cleave covalent DNA-protein cross-links (DPCs). In contrast, double-stranded DNA-binding specifically activates autocatalytic cleavage, and subsequent inactivation. Functionally, DNA-dependent metalloendopeptidase that mediates the proteolytic cleavage of covalent DNA-protein cross-links (DPCs) during DNA synthesis, thereby playing a key role in maintaining genomic integrity. DPCs are highly toxic DNA lesions that interfere with essential chromatin transactions, such as replication and transcription, and which are induced by reactive agents, such as UV light or formaldehyde. Associates with the DNA replication machinery and specifically removes DPCs during DNA synthesis. Catalyzes proteolytic cleavage of the HMCES DNA-protein cross-link following unfolding by the BRIP1/FANCJ helicase. Acts as a pleiotropic protease for DNA-binding proteins cross-linked with DNA, such as TOP1, TOP2A, histones H3 and H4. Mediates degradation of DPCs that are not ubiquitinated, while it is not able to degrade ubiquitinated DPCs. SPRTN activation requires polymerase collision with DPCs followed by helicase bypass of DPCs. Involved in recruitment of VCP/p97 to sites of DNA damage. Also acts as an activator of CHEK1 during normal DNA replication by mediating proteolytic cleavage of CHEK1, thereby promoting CHEK1 removal from chromatin and subsequent activation. Does not activate CHEK1 in response to DNA damage. May also act as a 'reader' of ubiquitinated PCNA: recruited to sites of UV damage and interacts with ubiquitinated PCNA and RAD18, the E3 ubiquitin ligase that monoubiquitinates PCNA. Facilitates chromatin association of RAD18 and is required for efficient PCNA monoubiquitination, promoting a feed-forward loop to enhance PCNA ubiquitination and translesion DNA synthesis. This chain is DNA-dependent metalloprotease SPRTN, found in Rattus norvegicus (Rat).